The primary structure comprises 233 residues: Uridylate kinase (233 aa).

Lys7–Gly10 is a binding site for ATP. Gly49 contributes to the UMP binding site. Gly50 and Arg54 together coordinate ATP. UMP-binding positions include Asp68 and Thr129–Thr136. 3 residues coordinate ATP: Thr156, Tyr162, and Asp165.

It belongs to the UMP kinase family. In terms of assembly, homohexamer.

It localises to the cytoplasm. It catalyses the reaction UMP + ATP = UDP + ADP. It participates in pyrimidine metabolism; CTP biosynthesis via de novo pathway; UDP from UMP (UMPK route): step 1/1. Inhibited by UTP. Catalyzes the reversible phosphorylation of UMP to UDP. This is Uridylate kinase from Neorickettsia sennetsu (strain ATCC VR-367 / Miyayama) (Ehrlichia sennetsu).